Consider the following 1073-residue polypeptide: MPKRTDIKSILILGAGPIVIGQACEFDYSGAQACKALREEGYRVILVNSNPATIMTDPAMADATYIEPIKWQTVAKIIEKERPDALLPTMGGQTALNCALDLEREGVLEKFGVEMIGANADTIDKAEDRSRFDKAMKSIGLACPRSGIAHSMEEANAVLEKLGFPCIIRPSFTMGGTGGGIAYNREEFEEICARGLDLSPTKELLIDESLIGWKEYEMEVVRDKKDNCIIVCSIENFDPMGVHTGDSITVAPAQTLTDKEYQILRNASLAVLREIGVETGGSNVQFGICPDTGRMVVIEMNPRVSRSSALASKATGFPIARVAAKLAVGYTLDELSNEITGGKTPASFEPSIDYVVTKLPRFAFEKFAKADARLTTQMKSVGEVMAIGRTFQESLQKALRGLEVGVCGLDPKLDLSHPESMSTLKRELTVPGAERIWYVADAFRAGMTVEEIFAMNMIDPWFLVQIEDLVKDEEKIKTLGLSAIDRDLMYRLKRKGFSDARLAKLVGVTEKNLRTHRHKLDVFPVYKRVDTCAAEFATDTAYLYSTYEEECEANPSTRDKIMILGGGPNRIGQGIEFDYCCVHAALALREDGYETIMVNCNPETVSTDYDTSDRLYFEPVTLEDVLEIVRVEKPKGVIVQYGGQTPLKLARALEAAGVPIIGTSPDAIDRAEDRERFQQMVERLNLRQPPNATVRSEDEAIRAAAKIGYPLVVRPSYVLGGRAMEIVYQEDELKRYLREAVQVSNDSPVLLDHFLNCAIEMDVDAVCDGTDVVIGAIMQHIEQAGVHSGDSACSLPPYSLPAHIQDEMREQVKKMALELGVVGLMNVQLALQGEDIYVIEVNPRASRTVPFVSKCIGVSLAMIAARVMAGKTLKELNFTKEIIPNFYSVKEAVFPFAKFPGVDPILGPEMKSTGEVMGVGDTFGEAFAKAQMGASEVLPTGGTAFISVRDDDKPLVEAVARDLINLGFEIVATAGTAKLIEAAGLKVRRVNKVTEGRPHVVDMIKNDEVTLIINTTEGRQSIADSYSIRRNALQHKIYCTTTIAAGEAICEALKFGPEKTVRRLQDLHAGLKA.

The interval 1–403 (MPKRTDIKSI…SLQKALRGLE (403 aa)) is carboxyphosphate synthetic domain. ATP is bound by residues R129, R169, G175, G176, E208, L210, E215, G241, V242, H243, Q285, and E299. Residues 133–328 (DKAMKSIGLA…IARVAAKLAV (196 aa)) enclose the ATP-grasp 1 domain. Q285, E299, and N301 together coordinate Mg(2+). Mn(2+)-binding residues include Q285, E299, and N301. The interval 404-553 (VGVCGLDPKL…YSTYEEECEA (150 aa)) is oligomerization domain. The segment at 554–935 (NPSTRDKIMI…AFAKAQMGAS (382 aa)) is carbamoyl phosphate synthetic domain. In terms of domain architecture, ATP-grasp 2 spans 678–869 (QQMVERLNLR…LAMIAARVMA (192 aa)). Residues R714, H753, L755, E760, G785, V786, H787, S788, Q828, and E840 each coordinate ATP. Positions 828, 840, and 842 each coordinate Mg(2+). Mn(2+)-binding residues include Q828, E840, and N842. The 138-residue stretch at 936-1073 (EVLPTGGTAF…LQDLHAGLKA (138 aa)) folds into the MGS-like domain. Residues 936 to 1073 (EVLPTGGTAF…LQDLHAGLKA (138 aa)) form an allosteric domain region.

Belongs to the CarB family. Composed of two chains; the small (or glutamine) chain promotes the hydrolysis of glutamine to ammonia, which is used by the large (or ammonia) chain to synthesize carbamoyl phosphate. Tetramer of heterodimers (alpha,beta)4. The cofactor is Mg(2+). It depends on Mn(2+) as a cofactor.

It catalyses the reaction hydrogencarbonate + L-glutamine + 2 ATP + H2O = carbamoyl phosphate + L-glutamate + 2 ADP + phosphate + 2 H(+). The catalysed reaction is hydrogencarbonate + NH4(+) + 2 ATP = carbamoyl phosphate + 2 ADP + phosphate + 2 H(+). The protein operates within amino-acid biosynthesis; L-arginine biosynthesis; carbamoyl phosphate from bicarbonate: step 1/1. It participates in pyrimidine metabolism; UMP biosynthesis via de novo pathway; (S)-dihydroorotate from bicarbonate: step 1/3. In terms of biological role, large subunit of the glutamine-dependent carbamoyl phosphate synthetase (CPSase). CPSase catalyzes the formation of carbamoyl phosphate from the ammonia moiety of glutamine, carbonate, and phosphate donated by ATP, constituting the first step of 2 biosynthetic pathways, one leading to arginine and/or urea and the other to pyrimidine nucleotides. The large subunit (synthetase) binds the substrates ammonia (free or transferred from glutamine from the small subunit), hydrogencarbonate and ATP and carries out an ATP-coupled ligase reaction, activating hydrogencarbonate by forming carboxy phosphate which reacts with ammonia to form carbamoyl phosphate. The protein is Carbamoyl phosphate synthase large chain of Pseudomonas syringae pv. tomato (strain ATCC BAA-871 / DC3000).